We begin with the raw amino-acid sequence, 170 residues long: Cyclic pyranopterin monophosphate synthase 1 (170 aa).

Substrate-binding positions include 79-81 (LCH) and 116-117 (ME). Residue Asp-131 is part of the active site.

The protein belongs to the MoaC family. As to quaternary structure, homohexamer; trimer of dimers.

The catalysed reaction is (8S)-3',8-cyclo-7,8-dihydroguanosine 5'-triphosphate = cyclic pyranopterin phosphate + diphosphate. Its pathway is cofactor biosynthesis; molybdopterin biosynthesis. Functionally, catalyzes the conversion of (8S)-3',8-cyclo-7,8-dihydroguanosine 5'-triphosphate to cyclic pyranopterin monophosphate (cPMP). In Mycobacterium bovis (strain ATCC BAA-935 / AF2122/97), this protein is Cyclic pyranopterin monophosphate synthase 1 (moaC1).